Consider the following 748-residue polypeptide: Polyribonucleotide nucleotidyltransferase (748 aa).

The Mg(2+) site is built by D487 and D493. The 60-residue stretch at 554 to 613 (PSTTTIKIDKDKIRDIIGPGGKVIKEICETSGAKIDISDDGTVSVYASDRDKLKVALDKI) folds into the KH domain. Positions 623 to 691 (GEIFNGTVVK…NKGKAKLTIK (69 aa)) constitute an S1 motif domain. The interval 695 to 733 (KDKFSNNTKPKTSVNNTKDNSEPEQRHDSSKKRAWNEDN) is disordered. A compositionally biased stretch (polar residues) spans 699-712 (SNNTKPKTSVNNTK). Residues 713–722 (DNSEPEQRHD) show a composition bias toward basic and acidic residues.

The protein belongs to the polyribonucleotide nucleotidyltransferase family. The cofactor is Mg(2+).

It is found in the cytoplasm. The catalysed reaction is RNA(n+1) + phosphate = RNA(n) + a ribonucleoside 5'-diphosphate. Its function is as follows. Involved in mRNA degradation. Catalyzes the phosphorolysis of single-stranded polyribonucleotides processively in the 3'- to 5'-direction. In Rickettsia rickettsii (strain Iowa), this protein is Polyribonucleotide nucleotidyltransferase.